Here is a 1074-residue protein sequence, read N- to C-terminus: Calcium-transporting ATPase 8, plasma membrane-type (1074 aa).

Positions 1–33 are disordered; the sequence is MTSLLKSSPGRRRGGDVESGKSEHADSDSDTFY. Residues 1-180 lie on the Cytoplasmic side of the membrane; it reads MTSLLKSSPG…NTYPRKKGKG (180 aa). The segment covering 13–27 has biased composition (basic and acidic residues); sequence RGGDVESGKSEHADS. An interaction with calmodulin region spans residues 43-54; the sequence is RLQQWRKAALVL. The chain crosses the membrane as a helical span at residues 181 to 201; sequence FLRFLWDACHDLTLIILMVAA. Over 202-219 the chain is Extracellular; it reads VASLALGIKTEGIKEGWY. The chain crosses the membrane as a helical span at residues 220–240; sequence DGGSIAFAVILVIVVTAVSDY. Over 241-369 the chain is Cytoplasmic; it reads KQSLQFQNLN…GEETPLQVRL (129 aa). Residues 370-389 form a helical membrane-spanning segment; the sequence is NGVATFIGSIGLAVAAAVLV. Topologically, residues 390-426 are extracellular; it reads ILLTRYFTGHTKDNNGGPQFVKGKTKVGHVIDDVVKV. The helical transmembrane segment at 427-444 threads the bilayer; sequence LTVAVTIVVVAVPEGLPL. The Cytoplasmic segment spans residues 445–840; sequence AVTLTLAYSM…RWGRSVYANI (396 aa). The 4-aspartylphosphate intermediate role is filled by Asp482. The Mg(2+) site is built by Asp785 and Asp789. A helical membrane pass occupies residues 841-859; sequence QKFIQFQLTVNVAALVINV. The Extracellular segment spans residues 860–870; that stretch reads VAAISSGDVPL. The helical transmembrane segment at 871 to 891 threads the bilayer; the sequence is TAVQLLWVNLIMDTLGALALA. Residues 892–911 are Cytoplasmic-facing; the sequence is TEPPTDHLMGRPPVGRKEPL. A helical transmembrane segment spans residues 912 to 934; the sequence is ITNIMWRNLLIQAIYQVSVLLTL. The Extracellular segment spans residues 935–949; it reads NFRGISILGLEHEVH. Residues 950 to 971 traverse the membrane as a helical segment; sequence EHATRVKNTIIFNAFVLCQAFN. The Cytoplasmic segment spans residues 972 to 989; sequence EFNARKPDEKNIFKGVIK. A helical membrane pass occupies residues 990–1011; sequence NRLFMGIIVITLVLQVIIVEFL. Over 1012-1021 the chain is Extracellular; the sequence is GKFASTTKLN. A helical membrane pass occupies residues 1022-1043; that stretch reads WKQWLICVGIGVISWPLALVGK. At 1044 to 1074 the chain is on the cytoplasmic side; that stretch reads FIPVPAAPISNKLKVLKFWGKKKNSSGEGSL.

It belongs to the cation transport ATPase (P-type) (TC 3.A.3) family. Type IIB subfamily.

It is found in the cell membrane. It carries out the reaction Ca(2+)(in) + ATP + H2O = Ca(2+)(out) + ADP + phosphate + H(+). Activated by calmodulin. This magnesium-dependent enzyme catalyzes the hydrolysis of ATP coupled with the translocation of calcium from the cytosol out of the cell. The polypeptide is Calcium-transporting ATPase 8, plasma membrane-type (ACA8) (Arabidopsis thaliana (Mouse-ear cress)).